We begin with the raw amino-acid sequence, 941 residues long: RNA-directed RNA polymerase (941 aa).

The interval 875 to 918 (SARQGGMGLPPPPPPPLGGGGMAGPPPPPFMGLRPESSVPTSVP) is disordered. Positions 905–918 (MGLRPESSVPTSVP) are enriched in low complexity.

In terms of assembly, forms a ribonucleoprotein complex with the 23S RNA, where a single polymerase molecule binds to a single viral RNA genome. Since the viral RNA is not encapsidated, ribonucleoprotein complex formation appears to be the strategy to survive in the host as persistent virus.

Its subcellular location is the host cytoplasm. It catalyses the reaction RNA(n) + a ribonucleoside 5'-triphosphate = RNA(n+1) + diphosphate. Its function is as follows. RNA-directed RNA polymerase that replicates the viral (+) and (-) genome. This chain is RNA-directed RNA polymerase, found in Saccharomyces 23S RNA narnavirus (ScNV-23S).